We begin with the raw amino-acid sequence, 229 residues long: Clathrin light chain B (229 aa).

A compositionally biased stretch (low complexity) spans M1–E17. A disordered region spans residues M1 to G82. A phosphoserine mark is found at S11 and S13. The segment covering G58–N73 has biased composition (polar residues). Residues A93 to R155 are involved in binding clathrin heavy chain. Position 187 is a phosphothreonine (T187). C199 and C209 are joined by a disulfide. K204 carries the post-translational modification N6-acetyllysine. A Phosphoserine modification is found at S217.

The protein belongs to the clathrin light chain family. As to quaternary structure, clathrin coats are formed from molecules containing 3 heavy chains and 3 light chains. Interacts (via N-terminus) with HIP1. Interacts with HIP1R.

It localises to the cytoplasmic vesicle membrane. The protein localises to the membrane. It is found in the coated pit. Clathrin is the major protein of the polyhedral coat of coated pits and vesicles. This Homo sapiens (Human) protein is Clathrin light chain B (CLTB).